A 2352-amino-acid polypeptide reads, in one-letter code: Highly reducing polyketide synthase ZEA2 (2352 aa).

A Ketosynthase family 3 (KS3) domain is found at 9–433 (PGPVAIVGLA…GTNGHVVLEA (425 aa)). Catalysis depends on for beta-ketoacyl synthase activity residues C181, H316, and H356. The tract at residues 544-875 (FVFTGQGAQW…LATSLFLQGV (332 aa)) is malonyl-CoA:ACP transacylase (MAT) domain. S634 serves as the catalytic For malonyltransferase activity. Residues 923-1058 (RSIIGAPVPK…GLITIDYEGN (136 aa)) are N-terminal hotdog fold. A PKS/mFAS DH domain is found at 923-1242 (RSIIGAPVPK…TSELEMDGAA (320 aa)). The tract at residues 925-1237 (IIGAPVPKMN…VIDFRTSELE (313 aa)) is dehydratase (DH) domain. H955 functions as the Proton acceptor; for dehydratase activity in the catalytic mechanism. The interval 1086-1242 (PATYAKDRFY…TSELEMDGAA (157 aa)) is C-terminal hotdog fold. D1152 (proton donor; for dehydratase activity) is an active-site residue. Positions 1643-1955 (GLLDTLYFVD…QGKHRGKIVL (313 aa)) are enoylreductase (ER) domain. The interval 1979–2159 (ATYLFVGGLG…VSVNLGIMRD (181 aa)) is catalytic ketoreductase (KRc) domain. The Carrier domain occupies 2269–2346 (KATEIITNAL…SFAGKLASTS (78 aa)). At S2306 the chain carries O-(pantetheine 4'-phosphoryl)serine.

Its pathway is mycotoxin biosynthesis. In terms of biological role, highly reducing polyketide synthase; part of the gene cluster that mediates the biosynthesis of zearalenone (ZEA), a nonsteroid estrogen that is a contaminant of cereal grains and causes estrogenic disorders in humans and animals. The ZEA backbone is synthesized from a single acetyl-CoA molecule and eight malonyl-CoA molecules. The reducing polyketide synthase ZEA2 is proposed to synthesize a reduced hexaketide intermediate by using different combinations of its reductive domains during each round of condensation. The hexaketide thioester is then transacylated to the non-reducing polyketide synthase ZEA1 and is further condensed with three malonyl-CoAs without reductive tailoring to yield a mixed reduced/unreduced nonaketide. ZEA1 must be able to interact with ZEA2 to facilitate starter-unit acyltransfer and initiate polyketide biosynthesis. ZEA1 also mediates the required C2-C7 cyclization to form the resorcylate core and catalyzes the formation of the macrolactone. ZEB1 is then responsible for the chemical conversion of beta-zearalenonol (beta-ZOL) to ZEA in the biosynthetic pathway. The protein is Highly reducing polyketide synthase ZEA2 of Gibberella zeae (strain ATCC MYA-4620 / CBS 123657 / FGSC 9075 / NRRL 31084 / PH-1) (Wheat head blight fungus).